We begin with the raw amino-acid sequence, 940 residues long: Bifunctional uridylyltransferase/uridylyl-removing enzyme (940 aa).

Residues 1–379 (MPRRLRPTRL…PGARPKRKAL (379 aa)) are uridylyltransferase. A uridylyl-removing region spans residues 380–736 (DVEGFYEDGG…GQVRPGSNAA (357 aa)). The HD domain occupies 496 to 618 (VDEHTLRAVG…VENPERLRLL (123 aa)). ACT domains lie at 737 to 821 (EVVI…PRRG) and 848 to 929 (VVEA…AARP).

The protein belongs to the GlnD family. The cofactor is Mg(2+).

The catalysed reaction is [protein-PII]-L-tyrosine + UTP = [protein-PII]-uridylyl-L-tyrosine + diphosphate. The enzyme catalyses [protein-PII]-uridylyl-L-tyrosine + H2O = [protein-PII]-L-tyrosine + UMP + H(+). With respect to regulation, uridylyltransferase (UTase) activity is inhibited by glutamine, while glutamine activates uridylyl-removing (UR) activity. Modifies, by uridylylation and deuridylylation, the PII regulatory proteins (GlnB and homologs), in response to the nitrogen status of the cell that GlnD senses through the glutamine level. Under low glutamine levels, catalyzes the conversion of the PII proteins and UTP to PII-UMP and PPi, while under higher glutamine levels, GlnD hydrolyzes PII-UMP to PII and UMP (deuridylylation). Thus, controls uridylylation state and activity of the PII proteins, and plays an important role in the regulation of nitrogen assimilation and metabolism. This chain is Bifunctional uridylyltransferase/uridylyl-removing enzyme, found in Caulobacter vibrioides (strain ATCC 19089 / CIP 103742 / CB 15) (Caulobacter crescentus).